The chain runs to 603 residues: Geraniol synthase, chloroplastic (603 aa).

A chloroplast-targeting transit peptide spans M1–P50. Residues R301, D338, D342, R479, and D482 each coordinate (2E)-geranyl diphosphate. Mg(2+) contacts are provided by D338 and D342. The DDXXD motif motif lies at D338 to D342. The Mg(2+) site is built by D482, T486, and E490.

The protein belongs to the terpene synthase family. Tpsb subfamily. In terms of assembly, homodimer. Mg(2+) serves as cofactor. The cofactor is Mn(2+). In terms of tissue distribution, expressed in the oil cells of the leaves.

It localises to the plastid. The protein resides in the chloroplast. The enzyme catalyses (2E)-geranyl diphosphate + H2O = (2E)-geraniol + diphosphate. It participates in secondary metabolite biosynthesis; terpenoid biosynthesis. In terms of biological role, monoterpene synthase that catalyzes the formation of geraniol from geranyl diphosphate. The polypeptide is Geraniol synthase, chloroplastic (GerS) (Cinnamomum tenuipile (Alseodaphne mollis)).